Reading from the N-terminus, the 378-residue chain is Ecotin-like protein 3 (378 aa).

Disordered regions lie at residues 191–216 and 238–378; these read HRLS…HAAP and PQNN…KADP. A compositionally biased stretch (polar residues) spans 274-287; it reads NEPSPSRPRLSSTE. The span at 337 to 348 shows a compositional bias: basic and acidic residues; that stretch reads RKAEDNVYEKTM. Low complexity predominate over residues 362-378; it reads KASASSKKSGNGSKADP.

The protein belongs to the protease inhibitor I11 (ecotin) family.

This Leishmania infantum protein is Ecotin-like protein 3.